The primary structure comprises 236 residues: uncharacterized protein (236 aa).

The HTH gntR-type domain occupies 5 to 73 (QSTVENAKEK…DRKGWFVTQP (69 aa)). Positions 33 to 52 (ERELGELLGIKRMTLRQALL) form a DNA-binding region, H-T-H motif.

This is an uncharacterized protein from Escherichia coli O157:H7.